The chain runs to 547 residues: MGTPRGLRNAGSSSSACRFLAAFAVLLALPTLTAGLTRHYTFNVQMTNVTRLCVTKSIPTVNGQFPGPKLVVREGDRLVVKVHNHMNYNVSFHWHGILQLRNGWADGPSYITQCPIQGGGSYVYDFTVTGQRGTLWWHAHFSWLRVHLYGPLVILPKRGEGFPFPRPYKELPPIMFGEWFNADTEAVINQALQTGAGPNISDAYTFNGLPGPTYNCSSKDTYKVKVQPGRTYLLRLINSALNDELFFGIANHTLTVVEADANYVKPFTAKTLVISPGQTMNLLLTTAPNPGSPVYAMAIAPYTNTQGTFDNTTAVAVLEYAPTRASATGNNNLPLPPLPRYNDTNAVANFSSKFRSLATARYPARVPRAVDRHVLFTVGLGTDPCPSNQTCQGPNGTKFAASINNNSFVRPRVALLEAHCQRRVVPLAFNTSVELVLQGTSIQGAESHPLHMHGFNFFVVGQGFGNYDPVNDPANYNLVDPVERNTVSVPTGGWVAVRFLADNPGVWLMHCHFDVHLSWGLSMAWLVNDGPLPSQKMLPPPSDLPKC.

An N-terminal signal peptide occupies residues 1–35; that stretch reads MGTPRGLRNAGSSSSACRFLAAFAVLLALPTLTAG. Plastocyanin-like domains are found at residues 43 to 159 and 170 to 323; these read NVQM…PKRG and ELPP…YAPT. N-linked (GlcNAc...) asparagine glycans are attached at residues asparagine 48 and asparagine 89. Residues histidine 93, histidine 95, histidine 138, and histidine 140 each contribute to the Cu cation site. Asparagine 199, asparagine 215, asparagine 251, asparagine 311, asparagine 342, asparagine 349, asparagine 388, asparagine 395, asparagine 405, and asparagine 430 each carry an N-linked (GlcNAc...) asparagine glycan. Residues 408–531 enclose the Plastocyanin-like 3 domain; it reads FVRPRVALLE…SMAWLVNDGP (124 aa). Cu cation is bound by residues histidine 448, histidine 451, histidine 453, histidine 510, cysteine 511, histidine 512, and histidine 516.

It belongs to the multicopper oxidase family. It depends on Cu cation as a cofactor.

The protein localises to the secreted. The protein resides in the extracellular space. Its subcellular location is the apoplast. It catalyses the reaction 4 hydroquinone + O2 = 4 benzosemiquinone + 2 H2O. Its function is as follows. Lignin degradation and detoxification of lignin-derived products. In Oryza sativa subsp. japonica (Rice), this protein is Putative laccase-5 (LAC5).